A 673-amino-acid chain; its full sequence is tRNA 5-methylaminomethyl-2-thiouridine biosynthesis bifunctional protein MnmC (673 aa).

Residues 1-245 (MSHAPIQTAA…KREMLIGELP (245 aa)) are tRNA (mnm(5)s(2)U34)-methyltransferase. The tract at residues 272 to 673 (IGGGVASALT…VRKLLKGRAV (402 aa)) is FAD-dependent cmnm(5)s(2)U34 oxidoreductase.

The protein in the N-terminal section; belongs to the methyltransferase superfamily. tRNA (mnm(5)s(2)U34)-methyltransferase family. In the C-terminal section; belongs to the DAO family. FAD is required as a cofactor.

The protein localises to the cytoplasm. It carries out the reaction 5-aminomethyl-2-thiouridine(34) in tRNA + S-adenosyl-L-methionine = 5-methylaminomethyl-2-thiouridine(34) in tRNA + S-adenosyl-L-homocysteine + H(+). Functionally, catalyzes the last two steps in the biosynthesis of 5-methylaminomethyl-2-thiouridine (mnm(5)s(2)U) at the wobble position (U34) in tRNA. Catalyzes the FAD-dependent demodification of cmnm(5)s(2)U34 to nm(5)s(2)U34, followed by the transfer of a methyl group from S-adenosyl-L-methionine to nm(5)s(2)U34, to form mnm(5)s(2)U34. The sequence is that of tRNA 5-methylaminomethyl-2-thiouridine biosynthesis bifunctional protein MnmC from Serratia proteamaculans (strain 568).